We begin with the raw amino-acid sequence, 344 residues long: DNA-directed RNA polymerase subunit alpha (344 aa).

The alpha N-terminal domain (alpha-NTD) stretch occupies residues 1 to 238 (MKVIKTAPLI…KQLGVFGERP (238 aa)). An alpha C-terminal domain (alpha-CTD) region spans residues 253 to 344 (DAKDLSAKIE…EKLEDKGGND (92 aa)).

Belongs to the RNA polymerase alpha chain family. Homodimer. The RNAP catalytic core consists of 2 alpha, 1 beta, 1 beta' and 1 omega subunit. When a sigma factor is associated with the core the holoenzyme is formed, which can initiate transcription.

The enzyme catalyses RNA(n) + a ribonucleoside 5'-triphosphate = RNA(n+1) + diphosphate. Functionally, DNA-dependent RNA polymerase catalyzes the transcription of DNA into RNA using the four ribonucleoside triphosphates as substrates. The sequence is that of DNA-directed RNA polymerase subunit alpha from Helicobacter pylori (strain HPAG1).